Consider the following 57-residue polypeptide: UPF0391 membrane protein Arad_3976 (57 aa).

2 consecutive transmembrane segments (helical) span residues 4 to 24 (WAII…SGVS) and 33 to 53 (VLFA…VMAG).

It belongs to the UPF0391 family.

The protein localises to the cell membrane. The protein is UPF0391 membrane protein Arad_3976 of Rhizobium rhizogenes (strain K84 / ATCC BAA-868) (Agrobacterium radiobacter).